Consider the following 363-residue polypeptide: Cell division cycle-associated protein 3 (363 aa).

Positions 1–12 (MGSAESKAQVTP) are enriched in polar residues. 4 disordered regions span residues 1-81 (MGSA…TPLR), 126-152 (VESQ…KAET), 191-210 (MNDQ…EESP), and 231-363 (ENLN…HSNS). Residues 93–152 (KQLSEVFVAEDSSTEGGPLGFTGPEATNLERQVVESQTAPPAGEHVNDHEVEPSVEKAET) form an F-box-like region. Basic and acidic residues predominate over residues 137–152 (HVNDHEVEPSVEKAET). The segment covering 192-210 (NDQEESPIAETMNDQEESP) has biased composition (acidic residues). Over residues 259 to 285 (SVVSTESTQATGQQQKTRGKSPRSSGV) the composition is skewed to polar residues. Low complexity predominate over residues 296-308 (LLSSSSGRSPLRI). A compositionally biased stretch (polar residues) spans 311 to 321 (EDNSPNTNTQH). A KEN box motif is present at residues 353-355 (KEN).

In terms of assembly, interacts with wee1, when wee1 is phosphorylated at 'Ser-38'. Post-translationally, phosphorylated. In terms of processing, ubiquitinated and degraded by the APC/C-Cdh1 complex during G1 phase.

It localises to the cytoplasm. The protein localises to the cytosol. It participates in protein modification; protein ubiquitination. In terms of biological role, F-box-like protein which is required for entry into mitosis. Acts by participating in E3 ligase complexes that mediate the ubiquitination and degradation of WEE1 kinase at G2/M phase. The sequence is that of Cell division cycle-associated protein 3 (cdca3) from Xenopus laevis (African clawed frog).